A 222-amino-acid chain; its full sequence is Adenylate kinase, chloroplastic (222 aa).

Residue 15–20 (ASGKGT) coordinates ATP. The NMP stretch occupies residues 35-64 (SAGDLLRAEIAAGSENGKRAKEFMEKGQLV). AMP is bound by residues Arg-41, 62 to 64 (QLV), 91 to 94 (GYPR), and Gln-98. The tract at residues 128–161 (GRRLDPVTGKIYHLKYSPPENEEIASRLTQRFDD) is LID. ATP is bound at residue Arg-129. Arg-158 is a binding site for AMP. Ala-195 lines the ATP pocket.

In terms of assembly, monomer.

The protein resides in the plastid. It is found in the chloroplast. It carries out the reaction AMP + ATP = 2 ADP. Catalyzes the reversible transfer of the terminal phosphate group between ATP and AMP. Plays an important role in cellular energy homeostasis and in adenine nucleotide metabolism. The maize enzyme also works with CMP, albeit with 10% of the activity with AMP. The polypeptide is Adenylate kinase, chloroplastic (ADK1) (Zea mays (Maize)).